Here is a 207-residue protein sequence, read N- to C-terminus: 8-oxoguanine DNA glycosylase/AP lyase (207 aa).

Residues lysine 129 and aspartate 147 contribute to the active site.

It belongs to the type-2 OGG1 family.

It carries out the reaction 2'-deoxyribonucleotide-(2'-deoxyribose 5'-phosphate)-2'-deoxyribonucleotide-DNA = a 3'-end 2'-deoxyribonucleotide-(2,3-dehydro-2,3-deoxyribose 5'-phosphate)-DNA + a 5'-end 5'-phospho-2'-deoxyribonucleoside-DNA + H(+). Its function is as follows. Catalyzes the excision of an oxidatively damaged form of guanine (7,8-dihydro-8-oxoguanine = 8-oxoG) from DNA. Also cleaves the DNA backbone at apurinic/apyrimidinic sites (AP sites). The protein is 8-oxoguanine DNA glycosylase/AP lyase of Thermotoga sp. (strain RQ2).